Consider the following 287-residue polypeptide: MSESAIADFVSSFIPDTATHVEPVRGRVVMSKRRIVLAADDEKTTIPLNGVFDVQHETAPGDLARFFEDTVTIAYEHDEDRHVAVIEGGGSTVDRFVTLVFKALVHGTTVYAKHPARRGGRITDQPFEKGNLALSPGDLTITGDADTTIDLSTVSHFERVDREVNGSNKQLLSVRHMGSTGPITTELALSSGRKMNLLGRYIRLQYTHLKQELADVTLTSEEIEALVAIYSSGPNASLAAVLGVDASRVTMLLNDLIEKELVTDDDGIALTSLGRAAVSEHIEDVNL.

As to quaternary structure, interacts with chemotaxis (Che) proteins as well as flagella accessory (Fla) proteins.

Its function is as follows. Involved in taxis signal transduction. This is Taxis protein CheF2 (cheF2) from Halobacterium salinarum (strain ATCC 29341 / DSM 671 / R1).